Consider the following 274-residue polypeptide: Large ribosomal subunit protein uL2 (274 aa).

A disordered region spans residues 223–274 (VVMNPVDHPHGGGEGRTSGGRHPVSPWGVPTKGYKTRSNKRTDKYIVRRRNK).

This sequence belongs to the universal ribosomal protein uL2 family. In terms of assembly, part of the 50S ribosomal subunit. Forms a bridge to the 30S subunit in the 70S ribosome.

Its function is as follows. One of the primary rRNA binding proteins. Required for association of the 30S and 50S subunits to form the 70S ribosome, for tRNA binding and peptide bond formation. It has been suggested to have peptidyltransferase activity; this is somewhat controversial. Makes several contacts with the 16S rRNA in the 70S ribosome. This is Large ribosomal subunit protein uL2 from Vibrio cholerae serotype O1 (strain M66-2).